A 328-amino-acid chain; its full sequence is CMP-N-acetylneuraminate-beta-galactosamide-alpha-2,3-sialyltransferase 4 (328 aa).

Over 1 to 7 (MCPAGWK) the chain is Cytoplasmic. Residues 8–25 (LLAMLALVLVVMVWYSIS) traverse the membrane as a helical; Signal-anchor for type II membrane protein segment. At 26-328 (REDSFYFPIP…MGAVKNLTSF (303 aa)) the chain is on the lumenal side. Residues asparagine 56, asparagine 126, asparagine 305, and asparagine 324 are each glycosylated (N-linked (GlcNAc...) asparagine). Cysteine 115 and cysteine 268 are disulfide-bonded.

Belongs to the glycosyltransferase 29 family. Post-translationally, the soluble form derives from the membrane form by proteolytic processing.

Its subcellular location is the golgi apparatus. It localises to the golgi stack membrane. The protein localises to the secreted. The catalysed reaction is a beta-D-galactosyl-(1-&gt;3)-N-acetyl-beta-D-galactosaminyl derivative + CMP-N-acetyl-beta-neuraminate = an N-acetyl-alpha-neuraminyl-(2-&gt;3)-beta-D-galactosyl-(1-&gt;3)-N-acetyl-beta-D-galactosaminyl derivative + CMP + H(+). It catalyses the reaction a beta-D-galactosyl-(1-&gt;3)-N-acetyl-alpha-D-galactosaminyl derivative + CMP-N-acetyl-beta-neuraminate = an N-acetyl-alpha-neuraminyl-(2-&gt;3)-beta-D-galactosyl-(1-&gt;3)-N-acetyl-alpha-D-galactosaminyl derivative + CMP + H(+). The enzyme catalyses a beta-D-galactosyl-(1-&gt;4)-N-acetyl-beta-D-glucosaminyl derivative + CMP-N-acetyl-beta-neuraminate = an N-acetyl-alpha-neuraminyl-(2-&gt;3)-beta-D-galactosyl-(1-&gt;4)-N-acetyl-beta-D-glucosaminyl derivative + CMP + H(+). It carries out the reaction a ganglioside GM1 (d18:1(4E)) + CMP-N-acetyl-beta-neuraminate = a ganglioside GD1a (d18:1(4E)) + CMP + H(+). The catalysed reaction is a ganglioside GA1 (d18:1(4E)) + CMP-N-acetyl-beta-neuraminate = a ganglioside GM1b (d18:1(4E)) + CMP + H(+). It catalyses the reaction a ganglioside GT1c (d18:1(4E)) + CMP-N-acetyl-beta-neuraminate = a ganglioside GQ1c (d18:1(4E)) + CMP + H(+). The enzyme catalyses a neolactoside nLc4Cer + CMP-N-acetyl-beta-neuraminate = a neolactoside IV(3)-alpha-NeuAc-nLc4Cer + CMP + H(+). It carries out the reaction a neolactoside nLc4Cer(d18:1(4E)) + CMP-N-acetyl-beta-neuraminate = a neolactoside IV(3)-alpha-NeuAc-nLc4Cer(d18:1(4E)) + CMP + H(+). Its pathway is protein modification; protein glycosylation. The protein operates within glycolipid biosynthesis. Its function is as follows. A beta-galactoside alpha2-3 sialyltransferase involved in terminal sialylation of glycoproteins and glycolipids. Catalyzes the transfer of sialic acid (N-acetyl-neuraminic acid; Neu5Ac) from the nucleotide sugar donor CMP-Neu5Ac onto acceptor Galbeta-(1-&gt;3)-GalNAc- and Galbeta-(1-&gt;4)-GlcNAc-terminated glycoconjugates through an alpha2-3 linkage. Plays a major role in hemostasis. Responsible for sialylation of plasma VWF/von Willebrand factor, preventing its recognition by asialoglycoprotein receptors (ASGPR) and subsequent clearance. Regulates ASGPR-mediated clearance of platelets. Participates in the biosynthesis of the sialyl Lewis X epitopes, both on O- and N-glycans, which are recognized by SELE/E-selectin, SELP/P-selectin and SELL/L-selectin. Essential for selectin-mediated rolling and adhesion of leukocytes during extravasation. Contributes to adhesion and transendothelial migration of neutrophils likely through terminal sialylation of CXCR2. In glycosphingolipid biosynthesis, sialylates GM1 and GA1 gangliosides to form GD1a and GM1b, respectively. Metabolizes brain c-series ganglioside GT1c forming GQ1c. Synthesizes ganglioside LM1 (IV3Neu5Ac-nLc4Cer), a major structural component of peripheral nerve myelin. The chain is CMP-N-acetylneuraminate-beta-galactosamide-alpha-2,3-sialyltransferase 4 (ST3GAL4) from Pan troglodytes (Chimpanzee).